We begin with the raw amino-acid sequence, 560 residues long: Putative transport protein VSAL_I2029 (560 aa).

A run of 5 helical transmembrane segments spans residues isoleucine 14 to serine 34, leucine 37 to phenylalanine 57, phenylalanine 66 to leucine 86, leucine 94 to phenylalanine 114, and asparagine 161 to alanine 181. 2 RCK C-terminal domains span residues arginine 203 to glycine 292 and lysine 293 to phenylalanine 376. 5 consecutive transmembrane segments (helical) span residues leucine 386 to phenylalanine 406, valine 409 to leucine 429, glycine 451 to phenylalanine 471, valine 478 to alanine 498, and alanine 539 to leucine 559.

This sequence belongs to the AAE transporter (TC 2.A.81) family. YbjL subfamily.

The protein localises to the cell membrane. This chain is Putative transport protein VSAL_I2029, found in Aliivibrio salmonicida (strain LFI1238) (Vibrio salmonicida (strain LFI1238)).